We begin with the raw amino-acid sequence, 284 residues long: Sulfotransferase 2A6 (284 aa).

3'-phosphoadenylyl sulfate is bound at residue 43–48 (KSGTNW). Residue His-98 is the Proton acceptor of the active site. Residues Arg-120, Ser-128, Tyr-183, 217-222 (SSFQVM), and 246-248 (RNG) each bind 3'-phosphoadenylyl sulfate.

This sequence belongs to the sulfotransferase 1 family. In terms of assembly, oligomer. In terms of tissue distribution, liver, exhibiting a sex-dependent spatial localization in the lobule of the liver.

It is found in the cytoplasm. It localises to the cytosol. It catalyses the reaction an alcohol + 3'-phosphoadenylyl sulfate = an alkyl sulfate + adenosine 3',5'-bisphosphate + H(+). It carries out the reaction glycolithocholate + 3'-phosphoadenylyl sulfate = sulfoglycolithocholate + adenosine 3',5'-bisphosphate + H(+). The catalysed reaction is taurolithocholate + 3'-phosphoadenylyl sulfate = taurolithocholate 3-sulfate + adenosine 3',5'-bisphosphate + H(+). The enzyme catalyses 3beta-hydroxyandrost-5-en-17-one + 3'-phosphoadenylyl sulfate = dehydroepiandrosterone 3-sulfate + adenosine 3',5'-bisphosphate + H(+). It catalyses the reaction 3beta-hydroxy-5-cholenate + 3'-phosphoadenylyl sulfate = 3beta-sulfo-5-cholenate + adenosine 3',5'-bisphosphate + H(+). It carries out the reaction deoxycholate + 3'-phosphoadenylyl sulfate = 3alpha-sulfodeoxycholate + adenosine 3',5'-bisphosphate + H(+). The catalysed reaction is glycodeoxycholate + 3'-phosphoadenylyl sulfate = 3alpha-sulfoglycodeoxycholate + adenosine 3',5'-bisphosphate + H(+). The enzyme catalyses taurodeoxycholate + 3'-phosphoadenylyl sulfate = 3alpha-sulfotaurodeoxycholate + adenosine 3',5'-bisphosphate + H(+). In terms of biological role, sulfotransferase that utilizes 3'-phospho-5'-adenylyl sulfate (PAPS) as sulfonate donor to catalyze the sulfonation of the hydroxyl group of hydroxysteroids and bile acids. Prefered substrates are dehydroepiandrosterone (DHEA, also known as 3beta-hydroxyandrost-5-en-17-one) and 3beta-hydroxy-5-cholenoate, but can also catalyze deoxycholate and its conjugates, and lithocholate conjugates, in vitro. The chain is Sulfotransferase 2A6 from Rattus norvegicus (Rat).